Here is a 221-residue protein sequence, read N- to C-terminus: Cytidylate kinase 1 (221 aa).

ATP is bound at residue glycine 7–serine 15.

This sequence belongs to the cytidylate kinase family. Type 1 subfamily.

The protein localises to the cytoplasm. It catalyses the reaction CMP + ATP = CDP + ADP. It carries out the reaction dCMP + ATP = dCDP + ADP. The polypeptide is Cytidylate kinase 1 (Borrelia garinii subsp. bavariensis (strain ATCC BAA-2496 / DSM 23469 / PBi) (Borreliella bavariensis)).